A 944-amino-acid chain; its full sequence is Bifunctional glutamine synthetase adenylyltransferase/adenylyl-removing enzyme (944 aa).

The interval 1–440 (MSANSVFQQL…IFTQLIGEDD (440 aa)) is adenylyl removase. Residues 448–944 (VSEFKRLWLL…LSSKQKWLDE (497 aa)) form an adenylyl transferase region.

This sequence belongs to the GlnE family. It depends on Mg(2+) as a cofactor.

The enzyme catalyses [glutamine synthetase]-O(4)-(5'-adenylyl)-L-tyrosine + phosphate = [glutamine synthetase]-L-tyrosine + ADP. The catalysed reaction is [glutamine synthetase]-L-tyrosine + ATP = [glutamine synthetase]-O(4)-(5'-adenylyl)-L-tyrosine + diphosphate. In terms of biological role, involved in the regulation of glutamine synthetase GlnA, a key enzyme in the process to assimilate ammonia. When cellular nitrogen levels are high, the C-terminal adenylyl transferase (AT) inactivates GlnA by covalent transfer of an adenylyl group from ATP to specific tyrosine residue of GlnA, thus reducing its activity. Conversely, when nitrogen levels are low, the N-terminal adenylyl removase (AR) activates GlnA by removing the adenylyl group by phosphorolysis, increasing its activity. The regulatory region of GlnE binds the signal transduction protein PII (GlnB) which indicates the nitrogen status of the cell. In Proteus mirabilis (strain HI4320), this protein is Bifunctional glutamine synthetase adenylyltransferase/adenylyl-removing enzyme.